Here is a 427-residue protein sequence, read N- to C-terminus: Adenylosuccinate synthetase (427 aa).

GTP contacts are provided by residues 12–18 (GDEGKGK) and 40–42 (GHT). Asp-13 acts as the Proton acceptor in catalysis. Mg(2+) is bound by residues Asp-13 and Gly-40. IMP-binding positions include 13–16 (DEGK), 38–41 (NAGH), Thr-128, Arg-142, Gln-223, Thr-238, and Arg-302. His-41 (proton donor) is an active-site residue. Residue 298–304 (VTTGRAR) coordinates substrate. Residues Arg-304, 330–332 (KLD), and 412–414 (GVG) contribute to the GTP site.

The protein belongs to the adenylosuccinate synthetase family. In terms of assembly, homodimer. Requires Mg(2+) as cofactor.

Its subcellular location is the cytoplasm. The enzyme catalyses IMP + L-aspartate + GTP = N(6)-(1,2-dicarboxyethyl)-AMP + GDP + phosphate + 2 H(+). Its pathway is purine metabolism; AMP biosynthesis via de novo pathway; AMP from IMP: step 1/2. Functionally, plays an important role in the de novo pathway of purine nucleotide biosynthesis. Catalyzes the first committed step in the biosynthesis of AMP from IMP. The polypeptide is Adenylosuccinate synthetase (Frankia alni (strain DSM 45986 / CECT 9034 / ACN14a)).